The chain runs to 346 residues: Putative aquaporin-7B (346 aa).

Topologically, residues methionine 1 to glutamate 40 are cytoplasmic. A helical membrane pass occupies residues phenylalanine 41–serine 58. Residues valine 59 to tyrosine 71 lie on the Extracellular side of the membrane. A helical membrane pass occupies residues leucine 72–alanine 89. Over glycine 90 to serine 93 the chain is Cytoplasmic. An intramembrane region (discontinuously helical) is located at residues glycine 94–alanine 107. The NPA 1 signature appears at asparagine 98–alanine 100. The Cytoplasmic segment spans residues leucine 108–lysine 115. Residues phenylalanine 116–serine 136 form a helical membrane-spanning segment. The Extracellular segment spans residues leucine 137 to arginine 174. A helical membrane pass occupies residues glycine 175–threonine 192. Residues isoleucine 193–glycine 204 are Cytoplasmic-facing. Residues threonine 205–histidine 221 traverse the membrane as a helical segment. Residues glycine 222–threonine 225 are Extracellular-facing. Residues glycine 226–isoleucine 239 constitute an intramembrane region (discontinuously helical). Positions asparagine 230 to serine 232 match the NPA 2 motif. Over phenylalanine 240–tryptophan 257 the chain is Extracellular. The chain crosses the membrane as a helical span at residues tryptophan 258–phenylalanine 279. Residues isoleucine 280–phenylalanine 346 are Cytoplasmic-facing.

The protein belongs to the MIP/aquaporin (TC 1.A.8) family. As to quaternary structure, homotetramer; each monomer provides an independent glycerol/water pore.

Its subcellular location is the membrane. The enzyme catalyses glycerol(in) = glycerol(out). It catalyses the reaction H2O(in) = H2O(out). Functionally, aquaglyceroporins form homotetrameric transmembrane channels, with each monomer independently mediating glycerol and water transport across the plasma membrane along their osmotic gradient. The sequence is that of Putative aquaporin-7B from Homo sapiens (Human).